We begin with the raw amino-acid sequence, 178 residues long: Glucagon-2 (178 aa).

Positions 1-21 (MFGIHSLAGVLLLVIVQSQLA) are cleaved as a signal peptide. 3 consecutive propeptides follow at residues 83–87 (SGAPS), 123–134 (ESAEESMNGPMS), and 171–178 (SNKRQEDH).

It belongs to the glucagon family.

The protein resides in the secreted. In terms of biological role, promotes hydrolysis of glycogen and lipids, and raises the blood sugar level. The chain is Glucagon-2 (gcg2) from Oncorhynchus mykiss (Rainbow trout).